The primary structure comprises 216 residues: Peroxiredoxin (216 aa).

One can recognise a Thioredoxin domain in the interval 2 to 158 (IVIGEKFPEV…ILRLVKALKI (157 aa)). The active-site Cysteine sulfenic acid (-SOH) intermediate is C46. R121 is a binding site for substrate. A disulfide bridge links C205 with C211.

The protein belongs to the peroxiredoxin family. Prx6 subfamily. Homodecamer. Pentamer of dimers that assemble into a ring structure.

It is found in the cytoplasm. It catalyses the reaction a hydroperoxide + [thioredoxin]-dithiol = an alcohol + [thioredoxin]-disulfide + H2O. Thiol-specific peroxidase that catalyzes the reduction of hydrogen peroxide and organic hydroperoxides to water and alcohols, respectively. Plays a role in cell protection against oxidative stress by detoxifying peroxides. This is Peroxiredoxin from Pyrococcus furiosus (strain ATCC 43587 / DSM 3638 / JCM 8422 / Vc1).